Consider the following 498-residue polypeptide: Aldehyde dehydrogenase, mitochondrial (498 aa).

Residues 1 to 9 (MLRATLARL) constitute a mitochondrion transit peptide. Position 242 to 247 (242 to 247 (GSTAVG)) interacts with NAD(+). The active-site Proton acceptor is the Glu-265. Cys-299 acts as the Nucleophile in catalysis.

Belongs to the aldehyde dehydrogenase family.

It localises to the mitochondrion. It carries out the reaction an aldehyde + NAD(+) + H2O = a carboxylate + NADH + 2 H(+). Its pathway is alcohol metabolism; ethanol degradation; acetate from ethanol: step 2/2. In terms of biological role, could have an RNA-binding activity in addition of its catalytic role. The chain is Aldehyde dehydrogenase, mitochondrial (ALDH2) from Leishmania tarentolae (Sauroleishmania tarentolae).